The chain runs to 1299 residues: DExH-box ATP-dependent RNA helicase DExH6 (1299 aa).

An R3H domain is found at 15–82 (PTSVEATRIW…QRRLSIFKSR (68 aa)). The 170-residue stretch at 197-366 (TSAVESNQVI…FGGCPVVRVP (170 aa)) folds into the Helicase ATP-binding domain. 210-217 (GETGCGKT) lines the ATP pocket. Positions 313 to 316 (DEIH) match the DEIH box motif. Residues 537–711 (LIQQLMRKIC…ELCLQVKILD (175 aa)) form the Helicase C-terminal domain. 2 disordered regions span residues 987 to 1039 (PTGS…MMSS) and 1175 to 1299 (IPRQ…AEQK). Over residues 992 to 1006 (DSDDSNEEEEDDEEV) the composition is skewed to acidic residues. Residues 1007–1020 (AANTNEEVAANTNE) are compositionally biased toward low complexity. Over residues 1023–1032 (MDIHKEESRR) the composition is skewed to basic and acidic residues. 3 stretches are compositionally biased toward polar residues: residues 1176–1193 (PRQQ…NNTD), 1204–1214 (NPTNRINQPEA), and 1239–1251 (PSDQ…QHNT). The Bipartite nuclear localization signal signature appears at 1182 to 1200 (KQRNPKATNNTDSGKKKEK). The Bipartite nuclear localization signal signature appears at 1267 to 1283 (KKTKTRSGNNSDSGKKK). A compositionally biased stretch (basic and acidic residues) spans 1279–1299 (SGKKKEQYIPKRQREDKAEQK).

It belongs to the DExH box helicase family. As to expression, specifically expressed in the tapetum and vascular tissues.

Its subcellular location is the nucleus. The enzyme catalyses ATP + H2O = ADP + phosphate + H(+). May function as an ATP-dependent RNA/DNA helicase. In Arabidopsis thaliana (Mouse-ear cress), this protein is DExH-box ATP-dependent RNA helicase DExH6.